Reading from the N-terminus, the 84-residue chain is Small ribosomal subunit protein uS17 (84 aa).

This sequence belongs to the universal ribosomal protein uS17 family. Part of the 30S ribosomal subunit.

In terms of biological role, one of the primary rRNA binding proteins, it binds specifically to the 5'-end of 16S ribosomal RNA. The protein is Small ribosomal subunit protein uS17 of Clostridium botulinum (strain 657 / Type Ba4).